The primary structure comprises 143 residues: Small ribosomal subunit protein uS12B (143 aa).

A 3,4-dihydroxyproline modification is found at proline 62.

It belongs to the universal ribosomal protein uS12 family. As to quaternary structure, component of the small ribosomal subunit (SSU). Mature yeast ribosomes consist of a small (40S) and a large (60S) subunit. The 40S small subunit contains 1 molecule of ribosomal RNA (18S rRNA) and at least 33 different proteins. The large 60S subunit contains 3 rRNA molecules (25S, 5.8S and 5S rRNA) and at least 46 different proteins. Post-translationally, hydroxylation at Pro-62 affects translation termination efficiency.

The protein resides in the cytoplasm. It is found in the nucleus. It localises to the nucleolus. Functionally, component of the ribosome, a large ribonucleoprotein complex responsible for the synthesis of proteins in the cell. The small ribosomal subunit (SSU) binds messenger RNAs (mRNAs) and translates the encoded message by selecting cognate aminoacyl-transfer RNA (tRNA) molecules. The large subunit (LSU) contains the ribosomal catalytic site termed the peptidyl transferase center (PTC), which catalyzes the formation of peptide bonds, thereby polymerizing the amino acids delivered by tRNAs into a polypeptide chain. The nascent polypeptides leave the ribosome through a tunnel in the LSU and interact with protein factors that function in enzymatic processing, targeting, and the membrane insertion of nascent chains at the exit of the ribosomal tunnel. This is Small ribosomal subunit protein uS12B (rps2302) from Schizosaccharomyces pombe (strain 972 / ATCC 24843) (Fission yeast).